The primary structure comprises 421 residues: Magnesium transporter MRS2-5 (421 aa).

2 helical membrane-spanning segments follow: residues 357–377 (LLLTAATFVAAIFAAVTAVFG) and 393–413 (YVLLITGIGCGFLYFGFVLYF). A Required for magnesium transport activity motif is present at residues 377–379 (GMN).

This sequence belongs to the CorA metal ion transporter (MIT) (TC 1.A.35.5) family. In terms of tissue distribution, expressed in the whole plant.

The protein localises to the membrane. Magnesium transporter that may mediate the influx of magnesium. The polypeptide is Magnesium transporter MRS2-5 (MRS2-5) (Arabidopsis thaliana (Mouse-ear cress)).